Reading from the N-terminus, the 199-residue chain is MAKVLVLYYSAYGHIETMAQAVAEGARAAGATVDIKRVPELVPAEVAKASHYKLDQAAPVASIDDLANYDAIIVGTGTRFGRMASQMANFLDQAGGLWAKGALHGKVGGAFTSTATQHGGQETTLFSIITNLLHFGMVVVGLNYGFAGQMTLDEVTGGSPYGATTITGGDGSRQPSANELAGARYQGQVIAETAIKLHG.

One can recognise a Flavodoxin-like domain in the interval 4–190 (VLVLYYSAYG…AGARYQGQVI (187 aa)). Residues 10–15 (SAYGHI) and 78–80 (TRF) each bind FMN. NAD(+) is bound at residue Tyr12. Trp98 contributes to the substrate binding site. Residues 113–119 (STATQHG) and His134 contribute to the FMN site.

Belongs to the WrbA family. It depends on FMN as a cofactor.

It catalyses the reaction a quinone + NADH + H(+) = a quinol + NAD(+). The enzyme catalyses a quinone + NADPH + H(+) = a quinol + NADP(+). This is NAD(P)H dehydrogenase (quinone) from Rhodopseudomonas palustris (strain BisA53).